Reading from the N-terminus, the 502-residue chain is MFS-type transporeter aprT (502 aa).

Positions 1 to 38 (MASPELASHHSDPSDGEGAPFLPGVDDESPESLNSDIP) are disordered. The next 11 helical transmembrane spans lie at 45-65 (HGLI…GPMI), 114-136 (IGYR…GLLA), 150-170 (VGFV…NIFP), 175-195 (WFGA…ALFW), 214-234 (FGIA…FVMK), 239-259 (VPLM…NLLP), 302-322 (VAVI…AFLV), 336-356 (ATLL…FILP), 380-400 (VMLL…NTLI), 403-423 (LLLH…ITGL), and 464-484 (LWIG…ALVL). Asparagine 495 is a glycosylation site (N-linked (GlcNAc...) asparagine).

This sequence belongs to the major facilitator superfamily.

The protein localises to the cell membrane. MFS-rype transporer; part of the gene cluster that mediates the biosynthesis of the asperipin-2a, a bicyclic peptide that possesses two macrocyclic ether rings consisting of 14- and 17-membered paracyclophans. AprT is likely to be involved in the cellular export of asperipin-2a. In Aspergillus flavus (strain ATCC 200026 / FGSC A1120 / IAM 13836 / NRRL 3357 / JCM 12722 / SRRC 167), this protein is MFS-type transporeter aprT.